Reading from the N-terminus, the 499-residue chain is Beta-amylase (499 aa).

The substrate site is built by aspartate 55, histidine 95, and aspartate 103. The active-site Proton donor is glutamate 188. 3 residues coordinate substrate: lysine 298, histidine 303, and threonine 345. The active-site Proton acceptor is the glutamate 383. Substrate contacts are provided by residues 384-385 and arginine 423; that span reads NA.

It belongs to the glycosyl hydrolase 14 family. Homotetramer.

The enzyme catalyses Hydrolysis of (1-&gt;4)-alpha-D-glucosidic linkages in polysaccharides so as to remove successive maltose units from the non-reducing ends of the chains.. This is Beta-amylase (BMY1) from Ipomoea batatas (Sweet potato).